Reading from the N-terminus, the 277-residue chain is Inositol monophosphatase 1 (277 aa).

The Mg(2+) site is built by Glu70, Asp90, Ile92, and Asp93. Glu70 provides a ligand contact to substrate. Residue 92–95 (IDGT) coordinates substrate. At Thr168 the chain carries Phosphothreonine. Substrate is bound by residues 194–196 (GTA), Glu213, and Asp220. Asp220 lines the Mg(2+) pocket.

It belongs to the inositol monophosphatase superfamily. As to quaternary structure, homodimer. Requires Mg(2+) as cofactor.

The protein localises to the cytoplasm. The catalysed reaction is a myo-inositol phosphate + H2O = myo-inositol + phosphate. It catalyses the reaction 1D-myo-inositol 1-phosphate + H2O = myo-inositol + phosphate. The enzyme catalyses 1D-myo-inositol 2-phosphate + H2O = myo-inositol + phosphate. It carries out the reaction 1D-myo-inositol 3-phosphate + H2O = myo-inositol + phosphate. The catalysed reaction is 1D-myo-inositol 4-phosphate + H2O = myo-inositol + phosphate. It catalyses the reaction 1D-myo-inositol 5-phosphate + H2O = myo-inositol + phosphate. The enzyme catalyses 1D-myo-inositol 6-phosphate + H2O = myo-inositol + phosphate. It carries out the reaction scyllo-inositol 1-phosphate + H2O = scyllo-inositol + phosphate. The catalysed reaction is alpha-D-galactose 1-phosphate + H2O = D-galactose + phosphate. It catalyses the reaction alpha-D-glucose 1-phosphate + H2O = D-glucose + phosphate. The enzyme catalyses D-glucose 6-phosphate + H2O = D-glucose + phosphate. It carries out the reaction beta-D-fructose 1-phosphate + H2O = D-fructose + phosphate. The catalysed reaction is glycerol 2-phosphate + H2O = glycerol + phosphate. It catalyses the reaction adenosine 2'-phosphate + H2O = adenosine + phosphate. It participates in polyol metabolism; myo-inositol biosynthesis; myo-inositol from D-glucose 6-phosphate: step 2/2. Activity with myo-inositol monophosphates and D-galactose 1-phosphate is inhibited by Li(+), Ca(2+) and Mn(2+), but also by Mg(2+) at concentrations above 3 mM. Its function is as follows. Phosphatase involved in the dephosphorylation of myo-inositol monophosphates to generate myo-inositol. Is also able to dephosphorylate scyllo-inositol-phosphate, myo-inositol 1,4-diphosphate, scyllo-inositol-1,3-diphosphate and scyllo-inositol-1,4-diphosphate. Also dephosphorylates in vitro other sugar-phosphates including D-galactose-1-phosphate, glucose-1-phosphate, glucose-6-phosphate, fructose-1-phosphate, beta-glycerophosphate and 2'-AMP. Responsible for the provision of inositol required for synthesis of phosphatidylinositols and polyphosphoinositides, and involved in maintaining normal brain function. Has been implicated as the pharmacological target for lithium (Li(+)) action in brain, which is used to treat bipolar affective disorder. Is equally active with 1D-myo-inositol 1-phosphate, 1D-myo-inositol 3-phosphate and D-galactose 1-phosphate. The protein is Inositol monophosphatase 1 of Homo sapiens (Human).